Here is a 176-residue protein sequence, read N- to C-terminus: Protein GrpE (176 aa).

The protein belongs to the GrpE family. As to quaternary structure, homodimer.

The protein resides in the cytoplasm. In terms of biological role, participates actively in the response to hyperosmotic and heat shock by preventing the aggregation of stress-denatured proteins, in association with DnaK and GrpE. It is the nucleotide exchange factor for DnaK and may function as a thermosensor. Unfolded proteins bind initially to DnaJ; upon interaction with the DnaJ-bound protein, DnaK hydrolyzes its bound ATP, resulting in the formation of a stable complex. GrpE releases ADP from DnaK; ATP binding to DnaK triggers the release of the substrate protein, thus completing the reaction cycle. Several rounds of ATP-dependent interactions between DnaJ, DnaK and GrpE are required for fully efficient folding. The chain is Protein GrpE from Thermoplasma volcanium (strain ATCC 51530 / DSM 4299 / JCM 9571 / NBRC 15438 / GSS1).